A 99-amino-acid chain; its full sequence is Signal recognition particle 19 kDa protein (99 aa).

It belongs to the SRP19 family. As to quaternary structure, part of the signal recognition particle protein translocation system, which is composed of SRP and FtsY. Archaeal SRP consists of a 7S RNA molecule of 300 nucleotides and two protein subunits: SRP54 and SRP19.

The protein localises to the cytoplasm. Involved in targeting and insertion of nascent membrane proteins into the cytoplasmic membrane. Binds directly to 7S RNA and mediates binding of the 54 kDa subunit of the SRP. This Pyrococcus horikoshii (strain ATCC 700860 / DSM 12428 / JCM 9974 / NBRC 100139 / OT-3) protein is Signal recognition particle 19 kDa protein.